Reading from the N-terminus, the 742-residue chain is Protein CdcH (742 aa).

ATP contacts are provided by residues 230 to 237 (GPPGTGKT) and 503 to 510 (GPPGTGKT). Residues 722 to 742 (FKGSQGPNVNSRQGSEHIGFQ) are disordered. Over residues 723–734 (KGSQGPNVNSRQ) the composition is skewed to polar residues.

This sequence belongs to the AAA ATPase family. CDC48 subfamily.

Functionally, may be part of a transduction pathway connecting light to cell division. This chain is Protein CdcH (cdcH), found in Halobacterium salinarum (strain ATCC 700922 / JCM 11081 / NRC-1) (Halobacterium halobium).